Here is a 2340-residue protein sequence, read N- to C-terminus: Proto-oncogene tyrosine-protein kinase ROS (2340 aa).

The signal sequence occupies residues 1 to 28 (MKNICWLTLKLVKFVVLGCIIWISVAQS). Over 29-1854 (TVLSSCLTSC…EDGVWITETS (1826 aa)) the chain is Extracellular. An N-linked (GlcNAc...) asparagine glycan is attached at Asn53. Fibronectin type-III domains are found at residues 111 to 206 (LPTA…VPET) and 207 to 295 (APLI…PSPS). N-linked (GlcNAc...) asparagine glycans are attached at residues Asn334 and Asn362. The 101-residue stretch at 567 to 667 (LPGHPQEVSV…APSVGTTLVP (101 aa)) folds into the Fibronectin type-III 3 domain. N-linked (GlcNAc...) asparagine glycans are attached at residues Asn935 and Asn1011. Fibronectin type-III domains lie at 943 to 1038 (IPDP…SVPS) and 1039 to 1146 (APEN…TSEI). A glycan (N-linked (GlcNAc...) asparagine) is linked at Asn1243. 4 Fibronectin type-III domains span residues 1442–1549 (ASDM…TKSG), 1550–1649 (VPGA…VNMF), 1651–1744 (TPEK…TKAG), and 1745–1846 (VPSK…LVED). The N-linked (GlcNAc...) asparagine glycan is linked to Asn1676. Residues 1855–1875 (FILTIIVGIFLVATVPLTFVW) form a helical membrane-spanning segment. Residues 1876-2340 (HRSLKSHKAS…AHSEHGDVSE (465 aa)) lie on the Cytoplasmic side of the membrane. One can recognise a Protein kinase domain in the interval 1938–2216 (LSLRLLLGSG…QLQLFRNVFL (279 aa)). Residues 1944–1952 (LGSGAFGEV) and Lys1973 contribute to the ATP site. Asp2072 (proton acceptor) is an active-site residue. 2 positions are modified to phosphotyrosine; by autocatalysis: Tyr2267 and Tyr2327.

This sequence belongs to the protein kinase superfamily. Tyr protein kinase family. Insulin receptor subfamily. In terms of assembly, interacts with PTPN11; may activate the PI3 kinase-mTOR signaling pathway. Interacts with VAV3; constitutive interaction mediating VAV3 phosphorylation. Interacts with PTPN6 (via SH2 1 domain); the interaction is direct and promotes ROS1 dephosphorylation. Phosphorylated. Probably autophosphorylates. Phosphorylation at Tyr-2267 and/or Tyr-2327 recruits PTPN11. Phosphorylation at Tyr-2267 is required for the interaction with PTPN6 that mediates ROS1 dephosphorylation. Phosphorylation at Tyr-2267 stimulates the kinase activity and the activation of the ERK1 signaling cascade. As to expression, expressed by epithelial cells of the caput epididymis (at protein level).

The protein localises to the cell membrane. It catalyses the reaction L-tyrosyl-[protein] + ATP = O-phospho-L-tyrosyl-[protein] + ADP + H(+). With respect to regulation, inhibited by dephosphorylation by PTPN6. Receptor tyrosine kinase (RTK) that plays a role in epithelial cell differentiation and regionalization of the proximal epididymal epithelium. NELL2 is an endogenous ligand for ROS1. Upon endogenous stimulation by NELL2, ROS1 activates the intracellular signaling pathway and triggers epididymal epithelial differentiation and subsequent sperm maturation. May activate several downstream signaling pathways related to cell differentiation, proliferation, growth and survival including the PI3 kinase-mTOR signaling pathway. Mediates the phosphorylation of PTPN11, an activator of this pathway. May also phosphorylate and activate the transcription factor STAT3 to control anchorage-independent cell growth. Mediates the phosphorylation and the activation of VAV3, a guanine nucleotide exchange factor regulating cell morphology. May activate other downstream signaling proteins including AKT1, MAPK1, MAPK3, IRS1, and PLCG2. In Mus musculus (Mouse), this protein is Proto-oncogene tyrosine-protein kinase ROS (Ros1).